Here is a 293-residue protein sequence, read N- to C-terminus: 4-hydroxy-tetrahydrodipicolinate synthase (293 aa).

Thr-46 is a binding site for pyruvate. Tyr-134 acts as the Proton donor/acceptor in catalysis. The active-site Schiff-base intermediate with substrate is the Lys-162. Ile-204 lines the pyruvate pocket.

The protein belongs to the DapA family. In terms of assembly, homotetramer; dimer of dimers.

It localises to the cytoplasm. It catalyses the reaction L-aspartate 4-semialdehyde + pyruvate = (2S,4S)-4-hydroxy-2,3,4,5-tetrahydrodipicolinate + H2O + H(+). It functions in the pathway amino-acid biosynthesis; L-lysine biosynthesis via DAP pathway; (S)-tetrahydrodipicolinate from L-aspartate: step 3/4. In terms of biological role, catalyzes the condensation of (S)-aspartate-beta-semialdehyde [(S)-ASA] and pyruvate to 4-hydroxy-tetrahydrodipicolinate (HTPA). This Bdellovibrio bacteriovorus (strain ATCC 15356 / DSM 50701 / NCIMB 9529 / HD100) protein is 4-hydroxy-tetrahydrodipicolinate synthase.